Reading from the N-terminus, the 202-residue chain is ATP-dependent Clp protease proteolytic subunit (202 aa).

S106 acts as the Nucleophile in catalysis. Residue H131 is part of the active site.

It belongs to the peptidase S14 family. As to quaternary structure, fourteen ClpP subunits assemble into 2 heptameric rings which stack back to back to give a disk-like structure with a central cavity, resembling the structure of eukaryotic proteasomes.

Its subcellular location is the cytoplasm. The catalysed reaction is Hydrolysis of proteins to small peptides in the presence of ATP and magnesium. alpha-casein is the usual test substrate. In the absence of ATP, only oligopeptides shorter than five residues are hydrolyzed (such as succinyl-Leu-Tyr-|-NHMec, and Leu-Tyr-Leu-|-Tyr-Trp, in which cleavage of the -Tyr-|-Leu- and -Tyr-|-Trp bonds also occurs).. Functionally, cleaves peptides in various proteins in a process that requires ATP hydrolysis. Has a chymotrypsin-like activity. Plays a major role in the degradation of misfolded proteins. The polypeptide is ATP-dependent Clp protease proteolytic subunit (Shewanella baltica (strain OS223)).